We begin with the raw amino-acid sequence, 326 residues long: Transcription initiation factor IIB (326 aa).

Residues 26–57 (DVEVCPECGSPRLIRDYRRGEFICQDCGLVIE) form a TFIIB-type zinc finger. Zn(2+) contacts are provided by C30, C33, C49, and C52. A run of 2 repeats spans residues 143–226 (SELD…TREL) and 237–318 (DYIP…ELAE).

Belongs to the TFIIB family.

Functionally, stabilizes TBP binding to an archaeal box-A promoter. Also responsible for recruiting RNA polymerase II to the pre-initiation complex (DNA-TBP-TFIIB). The sequence is that of Transcription initiation factor IIB from Archaeoglobus fulgidus (strain ATCC 49558 / DSM 4304 / JCM 9628 / NBRC 100126 / VC-16).